The primary structure comprises 100 residues: uncharacterized protein (100 aa).

The protein localises to the mitochondrion. This is an uncharacterized protein from Arabidopsis thaliana (Mouse-ear cress).